The sequence spans 24 residues: Fraternine (24 aa).

A disulfide bond links cysteine 11 and cysteine 24. Cysteine 24 is modified (cysteine amide).

As to expression, expressed by the venom gland.

The protein localises to the secreted. Wasp venom peptide that acts as a potent mast cell degranulating peptide without hemolytic activity. Shows neuroprotective effect, since it prevents the death of dopaminergic neurons of the brain substantia nigra region and recovers motor deficit in a 6-hydroxydopamine (6-OHDA)-induced murine model of Parkinson disease. This Parachartergus fraternus (Artistic wasp) protein is Fraternine.